The sequence spans 180 residues: UPF0227 protein Shew_1627 (180 aa).

It belongs to the UPF0227 family.

The chain is UPF0227 protein Shew_1627 from Shewanella loihica (strain ATCC BAA-1088 / PV-4).